The sequence spans 117 residues: Eukaryotic translation initiation factor 4E-binding protein 1 (117 aa).

Polar residues-rich tracts occupy residues 1-12 (MSAGSSCSQTPS) and 33-47 (YSTT…TTPG). Positions 1–47 (MSAGSSCSQTPSRAIPTRRVALGDGVQLPPGDYSTTPGGTLFSTTPG) are disordered. An N-acetylserine modification is found at Ser-2. Residues Thr-36 and Thr-40 each carry the phosphothreonine modification. Ser-43 is subject to Phosphoserine. Phosphothreonine is present on residues Thr-45 and Thr-49. Position 53 is a phosphotyrosine (Tyr-53). The YXXXXLphi motif signature appears at 53-59 (YDRKFLM). A Glycyl lysine isopeptide (Lys-Gly) (interchain with G-Cter in ubiquitin) cross-link involves residue Lys-56. Ser-64 bears the Phosphoserine mark. Residues 64–117 (SPVAKTPPKDLPAIPGVTSPTSDEPPMQASQSQLPSSPEDKRAGGEESQFEMDI) are disordered. Phosphothreonine is present on Thr-69. A compositionally biased stretch (polar residues) spans 81 to 99 (TSPTSDEPPMQASQSQLPS). Ser-82, Ser-95, Ser-99, Ser-100, and Ser-111 each carry phosphoserine. The TOS motif motif lies at 113–117 (FEMDI).

This sequence belongs to the eIF4E-binding protein family. As to quaternary structure, hypophosphorylated EIF4EBP1 competes with EIF4G1/EIF4G3 to interact with EIF4E; insulin stimulated MAP-kinase (MAPK1 and MAPK3) or mTORC1 phosphorylation of EIF4EBP1 causes dissociation of the complex allowing EIF4G1/EIF4G3 to bind and consequent initiation of translation. Interacts (via TOS motif) with RPTOR; promoting phosphorylation by mTORC1. Post-translationally, phosphorylated on serine and threonine residues in response to insulin, EGF and PDGF. Phosphorylation at Thr-36, Thr-45, Ser-64 and Thr-69, corresponding to the hyperphosphorylated form, is regulated by mTORC1 and abolishes binding to EIF4E. Ubiquitinated: when eIF4E levels are low, hypophosphorylated form is ubiquitinated by the BCR(KLHL25) complex, leading to its degradation and serving as a homeostatic mechanism to maintain translation and prevent eIF4E inhibition when eIF4E levels are low. Not ubiquitinated when hyperphosphorylated (at Thr-36, Thr-45, Ser-64 and Thr-69) or associated with eIF4E. As to expression, highest expression in fat cells.

It localises to the cytoplasm. It is found in the nucleus. Repressor of translation initiation that regulates EIF4E activity by preventing its assembly into the eIF4F complex: hypophosphorylated form competes with EIF4G1/EIF4G3 and strongly binds to EIF4E, leading to repress translation. In contrast, hyperphosphorylated form dissociates from EIF4E, allowing interaction between EIF4G1/EIF4G3 and EIF4E, leading to initiation of translation. Mediates the regulation of protein translation by hormones, growth factors and other stimuli that signal through the MAP kinase and mTORC1 pathways. The protein is Eukaryotic translation initiation factor 4E-binding protein 1 (Eif4ebp1) of Mus musculus (Mouse).